We begin with the raw amino-acid sequence, 214 residues long: Dual specificity phosphatase 29 (214 aa).

Positions 46 to 194 (HVNEVWPNLY…LRELDIELAL (149 aa)) constitute a Tyrosine-protein phosphatase domain. 138 to 145 (HCAMGRSR) provides a ligand contact to substrate. Cysteine 139 functions as the Phosphocysteine intermediate in the catalytic mechanism.

It belongs to the protein-tyrosine phosphatase family. Non-receptor class dual specificity subfamily.

It is found in the cytoplasm. The protein resides in the nucleus. The enzyme catalyses O-phospho-L-tyrosyl-[protein] + H2O = L-tyrosyl-[protein] + phosphate. It carries out the reaction O-phospho-L-seryl-[protein] + H2O = L-seryl-[protein] + phosphate. It catalyses the reaction O-phospho-L-threonyl-[protein] + H2O = L-threonyl-[protein] + phosphate. Its function is as follows. Dual specificity phosphatase able to dephosphorylate phosphotyrosine, phosphoserine and phosphothreonine residues within the same substrate, with a preference for phosphotyrosine as a substrate. Involved in the modulation of AMPK and MAPK1/2 signaling pathways. In Gallus gallus (Chicken), this protein is Dual specificity phosphatase 29 (DUSP29).